Reading from the N-terminus, the 97-residue chain is Small ribosomal subunit protein bS6 (97 aa).

Belongs to the bacterial ribosomal protein bS6 family.

Its function is as follows. Binds together with bS18 to 16S ribosomal RNA. This Lactococcus lactis subsp. lactis (strain IL1403) (Streptococcus lactis) protein is Small ribosomal subunit protein bS6 (rpsF).